Reading from the N-terminus, the 257-residue chain is Dihydroorotate dehydrogenase B (NAD(+)), electron transfer subunit (257 aa).

Residues 2 to 100 form the FAD-binding FR-type domain; that stretch reads ILIEDLTVVS…MGPQGNGFDI (99 aa). FAD-binding positions include 51–54, 68–70, and 75–76; these read RPIS, VYR, and GT. 4 residues coordinate [2Fe-2S] cluster: cysteine 220, cysteine 225, cysteine 228, and cysteine 244.

The protein belongs to the PyrK family. As to quaternary structure, heterotetramer of 2 PyrK and 2 PyrD type B subunits. Requires [2Fe-2S] cluster as cofactor. The cofactor is FAD.

Its pathway is pyrimidine metabolism; UMP biosynthesis via de novo pathway; orotate from (S)-dihydroorotate (NAD(+) route): step 1/1. Its function is as follows. Responsible for channeling the electrons from the oxidation of dihydroorotate from the FMN redox center in the PyrD type B subunit to the ultimate electron acceptor NAD(+). This Streptococcus thermophilus (strain ATCC BAA-491 / LMD-9) protein is Dihydroorotate dehydrogenase B (NAD(+)), electron transfer subunit.